Reading from the N-terminus, the 332-residue chain is L-lactate dehydrogenase A chain (332 aa).

Ala-2 carries the N-acetylalanine modification. Lys-5 is subject to N6-acetyllysine; alternate. Residue Lys-5 is modified to N6-succinyllysine; alternate. At Lys-14 the chain carries N6-acetyllysine. 29–57 (GAVGMACAISILMKDLADELALVDVMEDK) serves as a coordination point for NAD(+). The residue at position 57 (Lys-57) is an N6-acetyllysine; alternate. Lys-57 participates in a covalent cross-link: Glycyl lysine isopeptide (Lys-Gly) (interchain with G-Cter in SUMO2); alternate. Lys-81 carries the post-translational modification N6-acetyllysine. Position 99 (Arg-99) interacts with NAD(+). Residue Arg-106 participates in substrate binding. Residue Lys-118 is modified to N6-acetyllysine; alternate. Lys-118 carries the post-translational modification N6-succinyllysine; alternate. Lys-126 is subject to N6-acetyllysine. Asn-138 is a binding site for NAD(+). Substrate is bound by residues Asn-138 and Arg-169. The Proton acceptor role is filled by His-193. Lys-224 and Lys-232 each carry N6-acetyllysine. Tyr-239 carries the post-translational modification Phosphotyrosine. The residue at position 243 (Lys-243) is an N6-acetyllysine. Position 248 (Thr-248) interacts with substrate. Thr-309 carries the post-translational modification Phosphothreonine. The residue at position 318 (Lys-318) is an N6-acetyllysine; alternate. Lys-318 carries the N6-succinyllysine; alternate modification. Thr-322 bears the Phosphothreonine mark.

Belongs to the LDH/MDH superfamily. LDH family. As to quaternary structure, homotetramer. Interacts with PTEN upstream reading frame protein MP31. In terms of processing, ISGylated.

Its subcellular location is the cytoplasm. It carries out the reaction (S)-lactate + NAD(+) = pyruvate + NADH + H(+). It functions in the pathway fermentation; pyruvate fermentation to lactate; (S)-lactate from pyruvate: step 1/1. Interconverts simultaneously and stereospecifically pyruvate and lactate with concomitant interconversion of NADH and NAD(+). The sequence is that of L-lactate dehydrogenase A chain (Ldha) from Mus musculus (Mouse).